The following is a 522-amino-acid chain: Cyclic GMP-AMP synthase (522 aa).

Positions 1–144 are disordered; sequence MQPWHGKAMQ…PPGPWDVPSP (144 aa). DNA-binding stretches follow at residues 1 to 160 and 173 to 215; these read MQPW…DAAP and KLSR…GSYY. At Lys7 the chain carries N6-acetyllysine. Position 13 is a phosphoserine (Ser13). N6-acetyllysine is present on Lys21. Ser37 is modified (phosphoserine). Lys47, Lys50, Lys56, Lys62, and Lys63 each carry N6-acetyllysine. Ser64 bears the Phosphoserine mark. The span at 64–73 shows a compositional bias: basic and acidic residues; sequence SAPDTQERPP. The segment at 64–75 is required for association with the cell membrane; sequence SAPDTQERPPVR. Thr68 carries the post-translational modification Phosphothreonine. 2 positions are modified to N6-acetyllysine: Lys82 and Lys83. Residues 88-97 show a composition bias toward polar residues; sequence AQDTQPSDAT. Position 91 is a phosphothreonine (Thr91). Ser98, Ser116, and Ser129 each carry phosphoserine. Over residues 98–118 the composition is skewed to low complexity; the sequence is SAPGAEGLEPPAAREPALSRA. A required for activation upon DNA viral infection region spans residues 120–160; that stretch reads SCRQRGARCSTKPRPPPGPWDVPSPGLPVSAPILVRRDAAP. N6-lactoyllysine is present on Lys131. Residues 132–144 show a composition bias toward pro residues; it reads PRPPPGPWDVPSP. Residue Ser143 is modified to Phosphoserine. A Nuclear export signal motif is present at residues 169 to 174; the sequence is LEKLKL. Residue Lys173 forms a Glycyl lysine isopeptide (Lys-Gly) (interchain with G-Cter in ubiquitin) linkage. Position 191 is a polyADP-ribosyl aspartic acid (Asp191). Asn210 carries the (Microbial infection) Deamidated asparagine; by herpes simplex virus 1/HHV-1 UL37 modification. GTP is bound at residue Thr211. Ser213 bears the Phosphoserine mark. ATP is bound at residue Ser213. Tyr215 bears the Phosphotyrosine; by BLK mark. Residues Glu225 and Asp227 each contribute to the Mg(2+) site. 225-227 contacts ATP; it reads EFD. 2',3'-cGAMP is bound at residue Asp227. Residue Lys231 forms a Glycyl lysine isopeptide (Lys-Gly) (interchain with G-Cter in SUMO) linkage. Residue Lys285 forms a Glycyl lysine isopeptide (Lys-Gly) (interchain with G-Cter in ubiquitin) linkage. Position 286 is a 5-glutamyl polyglutamate (Glu286). A Nuclear localization signal motif is present at residues 295–305; that stretch reads DVIMKRKRGGS. The KRKR-loop motif lies at 299 to 302; the sequence is KRKR. Ser305 bears the Phosphoserine; by CDK1 and PKB mark. Glu314 is subject to 5-glutamyl glutamate. Position 319 (Asp319) interacts with GTP. Position 319 (Asp319) interacts with Mg(2+). Residue Asp319 participates in 2',3'-cGAMP binding. The segment at 341–382 is interaction with collided ribosomes; sequence QNWLSAKVRKQLRLKPFYLVPKHAKEGNGFQEETWRLSFSHI. Lys347 is covalently cross-linked (Glycyl lysine isopeptide (Lys-Gly) (interchain with G-Cter in SUMO); alternate). Lys347 participates in a covalent cross-link: Glycyl lysine isopeptide (Lys-Gly) (interchain with G-Cter in ubiquitin); alternate. Positions 362 and 376 each coordinate 2',3'-cGAMP. 376-383 contributes to the GTP binding site; it reads RLSFSHIE. ATP is bound at residue 380 to 383; it reads SHIE. Lys384 carries the post-translational modification N6-acetyllysine. A Glycyl lysine isopeptide (Lys-Gly) (interchain with G-Cter in SUMO); alternate cross-link involves residue Lys384. Residue Lys384 forms a Glycyl lysine isopeptide (Lys-Gly) (interchain with G-Cter in ubiquitin); alternate linkage. The tract at residues 384–407 is DNA-binding; sequence KEILNNHGKSKTCCENKEEKCCRK. Asn389 bears the (Microbial infection) Deamidated asparagine; by herpes simplex virus 1/HHV-1 UL37 mark. His390 is a binding site for Zn(2+). Lys392 and Lys394 each carry N6-acetyllysine. A Glycyl lysine isopeptide (Lys-Gly) (interchain with G-Cter in SUMO) cross-link involves residue Lys394. Residues Cys396, Cys397, and Cys404 each coordinate Zn(2+). S-palmitoyl cysteine attachment occurs at residues Cys404 and Cys405. Residues Lys411, Lys414, Lys427, and Lys428 each participate in a glycyl lysine isopeptide (Lys-Gly) (interchain with G-Cter in ubiquitin) cross-link. Lys414 carries the N6-acetyllysine modification. Lys414 is an ATP binding site. The KKH-loop signature appears at 427–429; sequence KKH. Phosphoserine occurs at positions 434 and 435. 435–439 is a binding site for ATP; that stretch reads SYHVK. (Microbial infection) Deamidated glutamine; by herpes simplex virus 1/HHV-1 UL37 occurs at positions 451 and 454. A lipid anchor (S-palmitoyl cysteine) is attached at Cys474. A Glycyl lysine isopeptide (Lys-Gly) (interchain with G-Cter in SUMO); alternate cross-link involves residue Lys479. Lys479 is covalently cross-linked (Glycyl lysine isopeptide (Lys-Gly) (interchain with G-Cter in ubiquitin); alternate). N6-methyllysine is present on Lys506.

It belongs to the mab-21 family. Monomer in the absence of DNA. Homodimer in presence of dsDNA: forms a 2:2 dimer with two enzymes binding to two DNA molecules. Interacts with nucleosomes; interaction is mainly mediated via histones H2A and H2B and inactivates the nucleotidyltransferase activity by blocking DNA-binding and subsequent activation. Interacts with PQBP1 (via WW domain). Interacts with TRIM14; this interaction recruits USP14, leading to deubiquitinate and stabilize CGAS and promote type I interferon production. Interacts with ZCCHC3; promoting sensing of dsDNA by CGAS. Interacts (when not monomethylated) with (poly-ADP-ribosylated) PARP1; interaction takes place in the nucleus and prevents the formation of the PARP1-TIMELESS complex. Interacts (when monomethylated) with SGF29; interaction with SGF29 prevents interaction with PARP1. Interacts with PCBP2; preventing the formation of liquid-like droplets in which CGAS is activated. Interacts with IRGM; promoting CGAS degradation. Interacts with DDX41. As to quaternary structure, (Microbial infection) Interacts with herpes virus 8/HHV-8 protein ORF52; this interaction inhibits cGAS enzymatic activity by preventing the formation of liquid-like droplets by CGAS. In terms of assembly, (Microbial infection) Interacts with herpes simplex virus 1 protein UL37; this interaction deaminates CGAS and inhibits its activation. (Microbial infection) Interacts with vaccinia virus protein OPG067; this interaction promotes CGAS proteasomal degradation. As to quaternary structure, (Microbial infection) Interacts with cytomegalovirus protein UL31; this interaction promotes dissociation of DNA from CGAS, thereby inhibiting the enzymatic activity of CGAS. In terms of assembly, (Microbial infection) Interacts with herpes simplex virus 1 tegument protein VP22 (UL49); this interaction inhibits cGAS enzymatic activity by preventing the formation of liquid-like droplets by CGAS. (Microbial infection) Interacts with herpesvirus 3 tegument protein VP22 (ORF9); this interaction inhibits cGAS enzymatic activity by preventing the formation of liquid-like droplets by CGAS. As to quaternary structure, (Microbial infection) Interacts with human cytomegalovirus proteins UL42 and UL83; these interactions result in the inhibition of cGAS-STING signaling. The cofactor is Mg(2+). Mn(2+) serves as cofactor. Zn(2+) is required as a cofactor. The N-terminal disordered part (1-160) is phosphorylated by AURKB during the G2-M transition, blocking CGAS liquid phase separation and preventing activation. Phosphorylation at Tyr-215 by BLK promotes cytosolic retention. Localizes into the nucleus following dephosphorylation at Tyr-215. Phosphorylation at Ser-435 activates the nucleotidyltransferase activity. Dephosphorylation at Ser-435 by PPP6C impairs its ability to bind GTP, thereby inactivating it. Phosphorylation at Thr-68 and Ser-213 by PRKDC inhibits its cyclic GMP-AMP synthase activity by impairing homodimerization and activation. Phosphorylation at Ser-305 by AKT (AKT1, AKT2 or AKT3) suppresses the nucleotidyltransferase activity. Phosphorylation at Ser-305 by CDK1 during mitosis leads to its inhibition, thereby preventing CGAS activation by self-DNA during mitosis. Dephosphorylated at Ser-305 by protein phosphatase PP1 upon mitotic exit. In terms of processing, ubiquitinated at Lys-414 via 'Lys-48'-linked polyubiquitin chains, leading to its SQSTM1-mediated autophagic degradation. Interaction with TRIM14 promotes recruitment of USP14, leading to deubiquitinate Lys-414 and stabilize CGAS. Ubiquitinated at Lys-173 and Lys-384 by RNF185 via 'Lys-27'-linked polyubiquitination, promoting CGAS cyclic GMP-AMP synthase activity. Monoubiquitination at Lys-347 by TRIM56 promotes oligomerization and subsequent activation. Monoubiquitination by TRIM41 promotes CGAS activation. Ubiquitination at Lys-285 and Lys-479 via 'Lys-48'-linked polyubiquitination promotes its degradation. Deubiquitination at Lys-285 by USP29 promotes its stabilization. Deubiquitinated by USP27X, promoting its stabilization. Ubiquitinated at Lys-411 via 'Lys-63'-linked polyubiquitin chains by MARCHF8, leading to the inhibition of its DNA binding ability. In cycling cells, nucleosome-bound CGAS is ubiquitinated at Lys-427 and Lys-428 via 'Lys-48'-linked polyubiquitin chains by the ECS(SPSB3) complex, leading to its degradation: ubiquitination and degradation of nuclear CGAS during G1 and G2 phases is required to promote low intranuclear CGAS abundance before the next mitotic cycle. Post-translationally, sumoylated at Lys-231 and Lys-479 by TRIM38 in uninfected cells and during the early phase of viral infection, promoting its stability by preventing ubiquitination at Lys-285 and Lys-479, and subsequent degradation. Desumoylated by SENP2 during the late phase of viral infection. Sumoylation at Lys-347, Lys-384 and Lys-394 prevents DNA-binding, oligomerization and nucleotidyltransferase activity. Desumoylation at Lys-347, Lys-384 and Lys-394 by SENP7 relieves inhibition and activates CGAS. Polyglutamylated by TTLL6 at Glu-286, leading to impair DNA-binding activity. Monoglutamylated at Glu-314 by TTLL4, leading to impair the nucleotidyltransferase activity. Deglutamylated by AGBL5/CCP5 and AGBL6/CCP6. In terms of processing, acetylation at Lys-384, Lys-394 and Lys-414 inhibits the cyclic GMP-AMP synthase activity. Deacetylated upon cytosolic DNA challenge such as viral infections. Acetylation can be mediated by aspirin (acetylsalicylate) drug, which directly acetylates CGAS. Acetylation by aspirin efficiently inhibits CGAS-mediated immune responses and is able to suppress self-DNA-induced autoimmunity. Acetylation at Lys-47, Lys-56, Lys-62 and Lys-83 by KAT5 increases the cyclic GMP-AMP synthase activity by promoting DNA-binding and subsequent activation. Post-translationally, proteolytically cleaved by apoptotic caspases during apoptosis, leading to its inactivation. The damage of the nucleus and the mitochondria during apoptosis leads to leakage of nuclear and mitochondrial DNA, which activate CGAS: cleavage and inactivation during apoptosis in required to prevent cytokine overproduction. Cleaved by CASP3 at Asp-319 during virus-induced apoptosis, thereby inactivating it and preventing cytokine overproduction. Cleaved by CASP1 at Asp-140 and Asp-157 upon DNA virus infection; the cleavage impairs cGAMP production. Also cleaved by the pyroptotic CASP4 and CASP5 during non-canonical inflammasome activation; they don't cut at the same sites than CASP1. Degraded via selective autophagy following interaction with IRGM. IRGM promotes CGAS recruitment to autophagosome membranes, promoting its SQSTM1/p62-dependent autophagic degradation. In terms of processing, poly-ADP-ribosylation at Asp-191 by PARP1 impairs DNA-binding, thereby preventing the cyclic GMP-AMP synthase activity. Post-translationally, palmitoylation at Cys-474 by ZDHHC18 impairs DNA-binding, thereby preventing the cyclic GMP-AMP synthase activity. Palmitoylation at Cys-404 and Cys-405 by ZDHHC9 promotes homodimerization and cyclic GMP-AMP synthase activity. Depalmitoylation at Cys-404 and Cys-405 by LYPLAL1 impairs homodimerization and cyclic GMP-AMP synthase activity. Monomethylated at Lys-506 by SETD7. Monomethylation promotes interaction with SGF29, preventing interaction between PARP1 nad SGF29. Demethylation by RIOX1 promotes interaction with PARP1, followed by PARP1 inactivation. In terms of processing, lactylation by AARS2 prevents ability to undergo liquid-liquid phase separation (LLPS), thereby inhibiting CGAS activation. Post-translationally, (Microbial infection) Deamidated on 'Asn-210' by herpes simplex virus 1 protein UL37. This modification significantly reduces CGAS-dependent cGAMP production and innate immune signaling induced by dsDNA. (Microbial infection) Degraded by an autophagy-mediated mechanism in presence of Chikungunya virus capsid protein. Expressed in the monocytic cell line THP1.

It localises to the nucleus. It is found in the chromosome. The protein resides in the cell membrane. Its subcellular location is the cytoplasm. The protein localises to the cytosol. It catalyses the reaction GTP + ATP = 2',3'-cGAMP + 2 diphosphate. The enzyme catalyses GTP + ATP = pppGp(2'-5')A + diphosphate. It carries out the reaction pppGp(2'-5')A = 2',3'-cGAMP + diphosphate. The enzyme activity is strongly increased by double-stranded DNA (dsDNA), but not by single-stranded DNA or RNA. DNA-binding induces the formation of liquid-like droplets in which CGAS is activated. Liquid-like droplets also create a selective environment that restricts entry of negative regulators, such as TREX1 or BANF1/BAF, allowing sensing of DNA. A number of mechanisms exist to restrict its activity toward self-DNA. The nucleotidyltransferase activity is inhibited in the nucleus via its association with nucleosomes: interacts with the acidic patch of histones H2A and H2B, thereby blocking DNA-binding and subsequent activation. CGAS is also inactive when associated with mitotic chromatin. Chromatin-bound CGAS cannot be activated by exogenous DNA in mitotic cells: phosphorylation of the N-terminal disordered part by AURKB during the G2-M transition blocks CGAS liquid phase separation and activation. Activity toward self-DNA is inhibited by BANF1/BAF upon acute loss of nuclear membrane integrity: BANF1/BAF acts by outcompeting CGAS for DNA-binding, thereby preventing CGAS activation. DNA-induced activation at micronuclei is also limited by TREX1, which degrades micronuclear DNA upon nuclear envelope rupture, thereby preventing CGAS activation. CGAS can be released from nucleosomes and activated by MRE11 component of the MRN complex, which displaces CGAS from acidic-patch-mediated sequestration. Acetylation at Lys-384, Lys-394 and Lys-414 inhibits the cyclic GMP-AMP synthase activity. Inhibited by aspirin (acetylsalicylate) drug, which acetylates CGAS. Acetylation by KAT5 increases the cyclic GMP-AMP synthase activity by promoting DNA-binding and subsequent activation. Phosphorylation at Ser-305 suppresses the nucleotidyltransferase activity. Phosphorylation at Ser-435 promotes the cyclic GMP-AMP synthase activity. Phosphorylation at Thr-68 and Ser-213 inhibits its cyclic GMP-AMP synthase activity. Ubiquitination at Lys-173 and Lys-384 via 'Lys-27'-linked polyubiquitination enhances the cyclic GMP-AMP synthase activity. Monoubiquitination at Lys-347 promotes oligomerization and subsequent activation. Sumoylation at Lys-347, Lys-384 and Lys-394 prevents DNA-binding, oligomerization and nucleotidyltransferase activity. The enzyme activity is impaired by the cleavage at Asp-140 and Asp-157 produced by CASP1. In addition to DNA, also activated by collided ribosomes upon translation stress: specifically binds collided ribosomes, promoting its activation and triggering type-I interferon production. Strongly inhibited by compound PF-06928215, which is specific for human protein. Inhibited by small-molecule inhibitors with a pyridoindole tricyclic core G108, G140 and G150. With respect to regulation, (Microbial infection) Nucleotidyltransferase activity is inhibited by different herpesvirus tegument proteins (Herpes simplex virus 1 tegument protein VP22, herpes virus 8 protein ORF52 and herpesvirus 3 tegument protein VP22/ORF9). Viral tegument proteins act by disrupting liquid-like droplets in which CGAS is activated, thereby preventing CGAS activity. Nucleotidyltransferase that catalyzes the formation of cyclic GMP-AMP (2',3'-cGAMP) from ATP and GTP and plays a key role in innate immunity. Catalysis involves both the formation of a 2',5' phosphodiester linkage at the GpA step and the formation of a 3',5' phosphodiester linkage at the ApG step, producing c[G(2',5')pA(3',5')p]. Acts as a key DNA sensor: directly binds double-stranded DNA (dsDNA), inducing the formation of liquid-like droplets in which CGAS is activated, leading to synthesis of 2',3'-cGAMP, a second messenger that binds to and activates STING1, thereby triggering type-I interferon production. Preferentially recognizes and binds curved long dsDNAs of a minimal length of 40 bp. Acts as a key foreign DNA sensor, the presence of double-stranded DNA (dsDNA) in the cytoplasm being a danger signal that triggers the immune responses. Has antiviral activity by sensing the presence of dsDNA from DNA viruses in the cytoplasm. Also acts as an innate immune sensor of infection by retroviruses, such as HIV-2, by detecting the presence of reverse-transcribed DNA in the cytosol. In contrast, HIV-1 is poorly sensed by CGAS, due to its capsid that cloaks viral DNA from CGAS detection. Detection of retroviral reverse-transcribed DNA in the cytosol may be indirect and be mediated via interaction with PQBP1, which directly binds reverse-transcribed retroviral DNA. Also detects the presence of DNA from bacteria, such as M.tuberculosis. 2',3'-cGAMP can be transferred from producing cells to neighboring cells through gap junctions, leading to promote STING1 activation and convey immune response to connecting cells. 2',3'-cGAMP can also be transferred between cells by virtue of packaging within viral particles contributing to IFN-induction in newly infected cells in a cGAS-independent but STING1-dependent manner. Also senses the presence of neutrophil extracellular traps (NETs) that are translocated to the cytosol following phagocytosis, leading to synthesis of 2',3'-cGAMP. In addition to foreign DNA, can also be activated by endogenous nuclear or mitochondrial DNA. When self-DNA leaks into the cytosol during cellular stress (such as mitochondrial stress, SARS-CoV-2 infection causing severe COVID-19 disease, DNA damage, mitotic arrest or senescence), or is present in form of cytosolic micronuclei, CGAS is activated leading to a state of sterile inflammation. Acts as a regulator of cellular senescence by binding to cytosolic chromatin fragments that are present in senescent cells, leading to trigger type-I interferon production via STING1 and promote cellular senescence. Also involved in the inflammatory response to genome instability and double-stranded DNA breaks: acts by localizing to micronuclei arising from genome instability. Micronuclei, which are frequently found in cancer cells, consist of chromatin surrounded by their own nuclear membrane: following breakdown of the micronuclear envelope, a process associated with chromothripsis, CGAS binds self-DNA exposed to the cytosol, leading to 2',3'-cGAMP synthesis and subsequent activation of STING1 and type-I interferon production. Activated in response to prolonged mitotic arrest, promoting mitotic cell death. In a healthy cell, CGAS is however kept inactive even in cellular events that directly expose it to self-DNA, such as mitosis, when cGAS associates with chromatin directly after nuclear envelope breakdown or remains in the form of postmitotic persistent nuclear cGAS pools bound to chromatin. Nuclear CGAS is inactivated by chromatin via direct interaction with nucleosomes, which block CGAS from DNA binding and thus prevent CGAS-induced autoimmunity. Also acts as a suppressor of DNA repair in response to DNA damage: inhibits homologous recombination repair by interacting with PARP1, the CGAS-PARP1 interaction leading to impede the formation of the PARP1-TIMELESS complex. In addition to DNA, also sense translation stress: in response to translation stress, translocates to the cytosol and associates with collided ribosomes, promoting its activation and triggering type-I interferon production. In contrast to other mammals, human CGAS displays species-specific mechanisms of DNA recognition and produces less 2',3'-cGAMP, allowing a more fine-tuned response to pathogens. The chain is Cyclic GMP-AMP synthase from Homo sapiens (Human).